We begin with the raw amino-acid sequence, 243 residues long: 7-cyano-7-deazaguanine synthase (243 aa).

18–28 provides a ligand contact to ATP; that stretch reads FSGGQDSATCL. The Zn(2+) site is built by Cys-206, Cys-221, Cys-224, and Cys-227.

This sequence belongs to the QueC family. The cofactor is Zn(2+).

It catalyses the reaction 7-carboxy-7-deazaguanine + NH4(+) + ATP = 7-cyano-7-deazaguanine + ADP + phosphate + H2O + H(+). It participates in purine metabolism; 7-cyano-7-deazaguanine biosynthesis. Functionally, catalyzes the ATP-dependent conversion of 7-carboxy-7-deazaguanine (CDG) to 7-cyano-7-deazaguanine (preQ(0)). In Maricaulis maris (strain MCS10) (Caulobacter maris), this protein is 7-cyano-7-deazaguanine synthase.